The sequence spans 232 residues: Ras-related protein RabP (232 aa).

15-22 (GNYGVGKS) lines the GTP pocket. An Effector region motif is present at residues 35 to 40 (DNTTGF). GTP-binding positions include 58-62 (DTSGQ) and 118-121 (NKFD). 2 S-geranylgeranyl cysteine lipidation sites follow: Cys-229 and Cys-230.

Belongs to the small GTPase superfamily. Rab family.

It localises to the cell membrane. The protein is Ras-related protein RabP (rabP) of Dictyostelium discoideum (Social amoeba).